Reading from the N-terminus, the 130-residue chain is Small ribosomal subunit protein uS9 (130 aa).

Residues 110-130 are disordered; sequence AKERKKYGRKGARARFQFSKR. Residues 111-130 show a composition bias toward basic residues; it reads KERKKYGRKGARARFQFSKR.

The protein belongs to the universal ribosomal protein uS9 family.

The sequence is that of Small ribosomal subunit protein uS9 from Syntrophotalea carbinolica (strain DSM 2380 / NBRC 103641 / GraBd1) (Pelobacter carbinolicus).